The sequence spans 268 residues: Small ribosomal subunit protein uS3 (268 aa).

A KH type-2 domain is found at 40–110; that stretch reads IRNLFFINYR…KLDLTINEIG (71 aa).

The protein belongs to the universal ribosomal protein uS3 family. As to quaternary structure, part of the 30S ribosomal subunit. Forms a tight complex with proteins S10 and S14.

Functionally, binds the lower part of the 30S subunit head. Binds mRNA in the 70S ribosome, positioning it for translation. This is Small ribosomal subunit protein uS3 from Mycoplasma genitalium (strain ATCC 33530 / DSM 19775 / NCTC 10195 / G37) (Mycoplasmoides genitalium).